Consider the following 418-residue polypeptide: MGILQDLEFRGLINQQTDDEGFEQLLEKESVKLYCGFDPTADSLHIGHMYPVLMLRRFQLAGHQPIALVGGGTGMIGDPSGKKAERTLNTKDTVAYYTESIKNQLSNFLEFENVDNPATMANNYDWLGNLDVISFLRDIGKNFGLNYMLAKDTVASRLETGISFTEFSYMILQSYDFLNLYQHHKCRLQIGGSDQWGNITAGLELIRKSEEDAKAFGLTIPLVTKSDGTKFGKTEGGAIWLDPEKTTPYEFYQFWINTDDRDVVKYLKYFTFLSHEEILELEKQVAEAPEKRAAQKALGSEMTKLVHGEEALEQAIKISAALFSGSVAELTASEIEQGFKDVPSVERTAEDTVLIDLLVESKISPSKRQAREDVTNGAIYVNGERTQALDYVVTENDRIEGKFTIIRRGKKKYFLIRY.

Tyr-34 provides a ligand contact to L-tyrosine. The 'HIGH' region signature appears at 39-48 (PTADSLHIGH). Positions 169 and 173 each coordinate L-tyrosine. Residues 230–234 (KFGKT) carry the 'KMSKS' region motif. Lys-233 is a binding site for ATP. An S4 RNA-binding domain is found at 352–418 (TVLIDLLVES…GKKKYFLIRY (67 aa)).

Belongs to the class-I aminoacyl-tRNA synthetase family. TyrS type 1 subfamily. As to quaternary structure, homodimer.

It is found in the cytoplasm. It carries out the reaction tRNA(Tyr) + L-tyrosine + ATP = L-tyrosyl-tRNA(Tyr) + AMP + diphosphate + H(+). Its function is as follows. Catalyzes the attachment of tyrosine to tRNA(Tyr) in a two-step reaction: tyrosine is first activated by ATP to form Tyr-AMP and then transferred to the acceptor end of tRNA(Tyr). In Bacillus cereus (strain ATCC 14579 / DSM 31 / CCUG 7414 / JCM 2152 / NBRC 15305 / NCIMB 9373 / NCTC 2599 / NRRL B-3711), this protein is Tyrosine--tRNA ligase 1.